A 435-amino-acid polypeptide reads, in one-letter code: Probable long-chain-alcohol O-fatty-acyltransferase 11 (435 aa).

Helical transmembrane passes span 7 to 27 (NLIK…YVPT), 36 to 56 (FLSV…FASV), 59 to 79 (SGYT…LFSF), 120 to 140 (PIEV…SVVL), 149 to 169 (IYPI…LEIL), 200 to 220 (DFWG…DVYA), 238 to 258 (LGVF…FFYI), 263 to 283 (PTGE…AYDA), 300 to 320 (CLIL…WLFF), 363 to 383 (FFTG…IGFV), and 406 to 426 (FFIG…IGFV).

Belongs to the wax synthase family.

It is found in the membrane. The catalysed reaction is a long chain fatty alcohol + a fatty acyl-CoA = a wax ester + CoA. Functionally, catalyzes the final step in the synthesis of long-chain linear esters (waxes). The polypeptide is Probable long-chain-alcohol O-fatty-acyltransferase 11 (Arabidopsis thaliana (Mouse-ear cress)).